A 358-amino-acid polypeptide reads, in one-letter code: Membrane-bound lytic murein transglycosylase C (358 aa).

An N-terminal signal peptide occupies residues 1 to 16 (MKKILALLVIAPLLIS). Residue Cys17 is the site of N-palmitoyl cysteine attachment. A lipid anchor (S-diacylglycerol cysteine) is attached at Cys17.

This sequence belongs to the transglycosylase Slt family.

It localises to the cell outer membrane. The catalysed reaction is Exolytic cleavage of the (1-&gt;4)-beta-glycosidic linkage between N-acetylmuramic acid (MurNAc) and N-acetylglucosamine (GlcNAc) residues in peptidoglycan, from either the reducing or the non-reducing ends of the peptidoglycan chains, with concomitant formation of a 1,6-anhydrobond in the MurNAc residue.. Functionally, murein-degrading enzyme. May play a role in recycling of muropeptides during cell elongation and/or cell division. This chain is Membrane-bound lytic murein transglycosylase C, found in Serratia proteamaculans (strain 568).